The primary structure comprises 465 residues: UDP-N-acetylmuramate--L-alanine ligase (465 aa).

ATP is bound at residue Gly114–Thr120.

It belongs to the MurCDEF family.

Its subcellular location is the cytoplasm. It catalyses the reaction UDP-N-acetyl-alpha-D-muramate + L-alanine + ATP = UDP-N-acetyl-alpha-D-muramoyl-L-alanine + ADP + phosphate + H(+). It functions in the pathway cell wall biogenesis; peptidoglycan biosynthesis. Its function is as follows. Cell wall formation. The protein is UDP-N-acetylmuramate--L-alanine ligase of Chelativorans sp. (strain BNC1).